A 339-amino-acid polypeptide reads, in one-letter code: Annexin A2 (339 aa).

S2 is subject to N-acetylserine. The tract at residues 2 to 24 (STVHEILCKLSLEGDHSTPASAY) is S100A10-binding site. The residue at position 24 (Y24) is a Phosphotyrosine; by SRC. At S26 the chain carries Phosphoserine; by PKC. Annexin repeat units follow at residues 33 to 104 (FDAE…GLLK) and 105 to 176 (TPAQ…ALAK). Position 49 is an N6-acetyllysine; alternate (K49). A Glycyl lysine isopeptide (Lys-Gly) (interchain with G-Cter in SUMO1); alternate cross-link involves residue K49. K49 is covalently cross-linked (Glycyl lysine isopeptide (Lys-Gly) (interchain with G-Cter in SUMO2); alternate). Position 152 is an N6-acetyllysine (K152). S184 carries the post-translational modification Phosphoserine. Annexin repeat units follow at residues 189-261 (ELID…NLVQ) and 265-336 (NKPL…YLCG). Position 199 is a phosphotyrosine (Y199). Residue K227 is modified to N6-acetyllysine.

It belongs to the annexin family. As to quaternary structure, heterotetramer containing 2 light chains of S100A10/p11 and 2 heavy chains of ANXA2/p36. Interacts with ATP1B1. Interacts with DYSF. Interacts with COCH. Interacts (via repeat Annexin 1) with PCSK9 (via the C-terminal domain); the interaction inhibits the degradation of LDLR. Interacts with CEACAM1 (via the cytoplasmic domain); this interaction is regulated by phosphorylation of CEACAM1. Interacts with APPL2 and APPL1; targets APPL2 to endosomes and acting in parallel to RAB5A. Interacts with S100A4. May interact with UBAP2. Interacts with PLEKHG4B; this interaction is required for PLEKHG4B localization to cell-cell adhesions. In terms of assembly, (Microbial infection) Interacts with classical swine fever virus envelope glycoprotein E2. ISGylated.

Its subcellular location is the secreted. The protein localises to the extracellular space. It is found in the extracellular matrix. The protein resides in the basement membrane. It localises to the melanosome. Calcium-regulated membrane-binding protein whose affinity for calcium is greatly enhanced by anionic phospholipids. It binds two calcium ions with high affinity. May be involved in heat-stress response. Inhibits PCSK9-enhanced LDLR degradation, probably reduces PCSK9 protein levels via a translational mechanism but also competes with LDLR for binding with PCSK9. Binds to endosomes damaged by phagocytosis of particulate wear debris and participates in endosomal membrane stabilization, thereby limiting NLRP3 inflammasome activation. Required for endothelial cell surface plasmin generation and may support fibrinolytic surveillance and neoangiogenesis. Its function is as follows. (Microbial infection) May serve as a receptor for classical swine fever virus (CSFV). Promotes CSFV infection. The chain is Annexin A2 (ANXA2) from Sus scrofa (Pig).